A 155-amino-acid chain; its full sequence is Ribonuclease H (155 aa).

The 142-residue stretch at 1-142 folds into the RNase H type-1 domain; the sequence is MLKQVEIFTD…CDELARAAAM (142 aa). Positions 10, 48, 70, and 134 each coordinate Mg(2+).

The protein belongs to the RNase H family. As to quaternary structure, monomer. Requires Mg(2+) as cofactor.

Its subcellular location is the cytoplasm. The enzyme catalyses Endonucleolytic cleavage to 5'-phosphomonoester.. Its function is as follows. Endonuclease that specifically degrades the RNA of RNA-DNA hybrids. The polypeptide is Ribonuclease H (Salmonella paratyphi A (strain AKU_12601)).